The chain runs to 553 residues: Hydroxylamine reductase (553 aa).

Residues Cys-3, Cys-6, Cys-18, and Cys-25 each contribute to the [2Fe-2S] cluster site. His-249, Glu-273, Cys-317, Cys-405, Cys-433, Cys-459, Glu-493, and Lys-495 together coordinate hybrid [4Fe-2O-2S] cluster. Position 405 is a cysteine persulfide (Cys-405).

Belongs to the HCP family. It depends on [2Fe-2S] cluster as a cofactor. Hybrid [4Fe-2O-2S] cluster serves as cofactor.

The protein localises to the cytoplasm. The enzyme catalyses A + NH4(+) + H2O = hydroxylamine + AH2 + H(+). Functionally, catalyzes the reduction of hydroxylamine to form NH(3) and H(2)O. This is Hydroxylamine reductase from Mannheimia succiniciproducens (strain KCTC 0769BP / MBEL55E).